A 62-amino-acid polypeptide reads, in one-letter code: Omega-conotoxin-like Bu11 (62 aa).

Residues 1 to 7 form the signal peptide; sequence ACQLITA. Positions 8-27 are excised as a propeptide; it reads EDSRGTQLHRALRSTSKVSK. 3 cysteine pairs are disulfide-bonded: cysteine 31–cysteine 46, cysteine 38–cysteine 49, and cysteine 45–cysteine 56.

Belongs to the conotoxin O1 superfamily. Expressed by the venom duct.

Its subcellular location is the secreted. Its function is as follows. Omega-conotoxins act at presynaptic membranes, they bind and block voltage-gated calcium channels (Cav). The polypeptide is Omega-conotoxin-like Bu11 (Conus bullatus (Bubble cone)).